The chain runs to 150 residues: UPF0178 protein Shew_2726 (150 aa).

It belongs to the UPF0178 family.

The sequence is that of UPF0178 protein Shew_2726 from Shewanella loihica (strain ATCC BAA-1088 / PV-4).